Reading from the N-terminus, the 172-residue chain is RNA pyrophosphohydrolase (172 aa).

Residues 6–149 (GFRANVGIII…KRDVYRKVMK (144 aa)) form the Nudix hydrolase domain. The Nudix box motif lies at 38–59 (GGVDEGETPEEAMFRELYEEVG).

Belongs to the Nudix hydrolase family. RppH subfamily. A divalent metal cation serves as cofactor.

Accelerates the degradation of transcripts by removing pyrophosphate from the 5'-end of triphosphorylated RNA, leading to a more labile monophosphorylated state that can stimulate subsequent ribonuclease cleavage. The chain is RNA pyrophosphohydrolase from Shewanella sediminis (strain HAW-EB3).